Reading from the N-terminus, the 838-residue chain is MVQLDVEKTIEELTLGEKVALTAGIDFWHTAAVPRLNIPSLRMSDGPNGVRGTRFFNGVPAACFPCATALGATWDTKLLYEVGRLMGEESIAKGAHVVLGPTINTQRSPLGGRGFESFAEDGVLSGILAGHYCKGLQETGVAATLKHFVCNDQEHERLAVDSIVTMRAMREIYLLPFQLAMRICKTACVMTAYNKVNGTHVSENKQIITDILRKEWGWDGLVMSDWFGTYSTCDAINAGLDLEMPGPTRWRGTALAHAVSSNKAFEFVMDERVRNILNLHNFVEPLGIPENAPEKALNRPEDQALLRRAAAESVVLIKNQDNILPLKKEKPILVIGPNAKTAAYCGGGSASLDAYYTVTPFEGVAAQSQGEVTFSQGVYSYKELPLLGPLLKTDDGKKGFKFRVYNEPPSEPNRQLIDELHLESSSGFLMDYKHPKIKTFTFYVDMEGYFTPEEDGIYDFGVTVVGTGKLFVDDELVVDNSKNQRQGTAMFGNATVEEKGSKELKAGQTYKVVLQFGTAPTSDLDMRGVVIFGPGGFRFGAARRVSQEELISKAAELASQTSQVVIFAGLTSEWETEGYDRDHMDLPPGSDEMISRVLDANPDTVVVIQSGTPVTMPWAHKAKALLQAWFGGNECGNGIADVLYGNVNPAAKLPLSFPVRLQDNPSYLNFRSERGRVLYGEDIYVGYRYYEKVDLAPLFPFGHGLSYTTFSRSDLSLATTPEKPQLEDGEPITVTVSVTNTGSVAGAEIVQLWVAPPPTGVNRPVRELKGFTKVFLQPGETKKVEIVVEKKLATSWWDEQREKWASEKGTYEVLVTGTGDEVLKSSFEVEKTRYWLGL.

N197 is a glycosylation site (N-linked (GlcNAc...) asparagine). D225 is a catalytic residue. In terms of domain architecture, PA14 spans 395-555; sequence DGKKGFKFRV…SQEELISKAA (161 aa). N-linked (GlcNAc...) asparagine glycosylation occurs at N493.

Belongs to the glycosyl hydrolase 3 family.

It is found in the secreted. It catalyses the reaction Hydrolysis of terminal, non-reducing beta-D-glucosyl residues with release of beta-D-glucose.. It functions in the pathway glycan metabolism; cellulose degradation. Beta-glucosidases are one of a number of cellulolytic enzymes involved in the degradation of cellulosic biomass. Catalyzes the last step releasing glucose from the inhibitory cellobiose. This chain is Probable beta-glucosidase I (bglI), found in Aspergillus fumigatus (strain ATCC MYA-4609 / CBS 101355 / FGSC A1100 / Af293) (Neosartorya fumigata).